Consider the following 414-residue polypeptide: Transposon Ty4-J Gag polyprotein (414 aa).

Positions 39-115 (RKVSIKDEQV…IQLLETNENN (77 aa)) form a coiled coil. Residues 378 to 414 (GAQRQQPLKSSAKRTKVLEQDTKKVEQSVQQQKTGNY) form a disordered region. The segment covering 393–403 (KVLEQDTKKVE) has biased composition (basic and acidic residues). Positions 404–414 (QSVQQQKTGNY) are enriched in polar residues.

Capsid protein (CA) is the structural component of the virus-like particle (VLP), forming the shell that encapsulates the retrotransposons dimeric RNA genome. The polypeptide is Transposon Ty4-J Gag polyprotein (TY4A-J) (Saccharomyces cerevisiae (strain ATCC 204508 / S288c) (Baker's yeast)).